A 299-amino-acid polypeptide reads, in one-letter code: ATP phosphoribosyltransferase (299 aa).

This sequence belongs to the ATP phosphoribosyltransferase family. Long subfamily. Mg(2+) serves as cofactor.

Its subcellular location is the cytoplasm. The enzyme catalyses 1-(5-phospho-beta-D-ribosyl)-ATP + diphosphate = 5-phospho-alpha-D-ribose 1-diphosphate + ATP. The protein operates within amino-acid biosynthesis; L-histidine biosynthesis; L-histidine from 5-phospho-alpha-D-ribose 1-diphosphate: step 1/9. Feedback inhibited by histidine. Catalyzes the condensation of ATP and 5-phosphoribose 1-diphosphate to form N'-(5'-phosphoribosyl)-ATP (PR-ATP). Has a crucial role in the pathway because the rate of histidine biosynthesis seems to be controlled primarily by regulation of HisG enzymatic activity. The polypeptide is ATP phosphoribosyltransferase (Shewanella sp. (strain MR-7)).